Here is a 404-residue protein sequence, read N- to C-terminus: Glutamate-pyruvate aminotransferase AlaA (404 aa).

Residues G41 and N179 each coordinate L-alanine. K240 carries the N6-(pyridoxal phosphate)lysine modification. R378 serves as a coordination point for L-alanine.

This sequence belongs to the class-I pyridoxal-phosphate-dependent aminotransferase family. As to quaternary structure, homodimer. The cofactor is pyridoxal 5'-phosphate.

The catalysed reaction is L-alanine + 2-oxoglutarate = pyruvate + L-glutamate. It participates in amino-acid biosynthesis; L-alanine biosynthesis. Involved in the biosynthesis of alanine. Catalyzes the transamination of pyruvate by glutamate, leading to the formation of L-alanine and 2-oxoglutarate. Is also able to catalyze the reverse reaction. This is Glutamate-pyruvate aminotransferase AlaA (alaA) from Haemophilus influenzae (strain ATCC 51907 / DSM 11121 / KW20 / Rd).